Consider the following 539-residue polypeptide: Probable 1,4-beta-D-glucan cellobiohydrolase B (539 aa).

A signal peptide spans 1–26 (MLPSTISYRIYKNALFFAALFGAVQA). The tract at residues 27–461 (QKVGTSKAEV…SNIKVGPIGS (435 aa)) is catalytic. The N-linked (GlcNAc...) asparagine glycan is linked to N90. E238 serves as the catalytic Nucleophile. E243 functions as the Proton donor in the catalytic mechanism. N-linked (GlcNAc...) asparagine glycosylation is found at N296 and N495. A thr-rich linker region spans residues 462-503 (TFNSGGSNPGGSTTTTKPATSTTTTKATTTATTNTTGPTGTG). Positions 462-503 (TFNSGGSNPGGSTTTTKPATSTTTTKATTTATTNTTGPTGTG) are enriched in low complexity. The disordered stretch occupies residues 462–504 (TFNSGGSNPGGSTTTTKPATSTTTTKATTTATTNTTGPTGTGV). The CBM1 domain occupies 503 to 539 (GVAQPWAQCGGIGYSGPTQCAAPYTCTKQNDYYSQCL). 2 disulfide bridges follow: C511-C528 and C522-C538.

The protein belongs to the glycosyl hydrolase 7 (cellulase C) family.

The protein resides in the secreted. The catalysed reaction is Hydrolysis of (1-&gt;4)-beta-D-glucosidic linkages in cellulose and cellotetraose, releasing cellobiose from the non-reducing ends of the chains.. Functionally, the biological conversion of cellulose to glucose generally requires three types of hydrolytic enzymes: (1) Endoglucanases which cut internal beta-1,4-glucosidic bonds; (2) Exocellobiohydrolases that cut the disaccharide cellobiose from the non-reducing end of the cellulose polymer chain; (3) Beta-1,4-glucosidases which hydrolyze the cellobiose and other short cello-oligosaccharides to glucose. The sequence is that of Probable 1,4-beta-D-glucan cellobiohydrolase B (cbhB) from Aspergillus clavatus (strain ATCC 1007 / CBS 513.65 / DSM 816 / NCTC 3887 / NRRL 1 / QM 1276 / 107).